Reading from the N-terminus, the 267-residue chain is 4-hydroxy-tetrahydrodipicolinate reductase (267 aa).

NAD(+)-binding positions include G12–M17, G100–T102, and A126–F129. H156 acts as the Proton donor/acceptor in catalysis. Residue H157 participates in (S)-2,3,4,5-tetrahydrodipicolinate binding. Catalysis depends on K160, which acts as the Proton donor. G166–T167 serves as a coordination point for (S)-2,3,4,5-tetrahydrodipicolinate.

The protein belongs to the DapB family.

The protein localises to the cytoplasm. The catalysed reaction is (S)-2,3,4,5-tetrahydrodipicolinate + NAD(+) + H2O = (2S,4S)-4-hydroxy-2,3,4,5-tetrahydrodipicolinate + NADH + H(+). It carries out the reaction (S)-2,3,4,5-tetrahydrodipicolinate + NADP(+) + H2O = (2S,4S)-4-hydroxy-2,3,4,5-tetrahydrodipicolinate + NADPH + H(+). It participates in amino-acid biosynthesis; L-lysine biosynthesis via DAP pathway; (S)-tetrahydrodipicolinate from L-aspartate: step 4/4. Functionally, catalyzes the conversion of 4-hydroxy-tetrahydrodipicolinate (HTPA) to tetrahydrodipicolinate. This Bacillus licheniformis (strain ATCC 14580 / DSM 13 / JCM 2505 / CCUG 7422 / NBRC 12200 / NCIMB 9375 / NCTC 10341 / NRRL NRS-1264 / Gibson 46) protein is 4-hydroxy-tetrahydrodipicolinate reductase.